The following is a 304-amino-acid chain: Ribonuclease Z (304 aa).

His63, His65, Asp67, His68, His141, Asp208, and His266 together coordinate Zn(2+). The active-site Proton acceptor is Asp67.

Belongs to the RNase Z family. As to quaternary structure, homodimer. Zn(2+) is required as a cofactor.

The enzyme catalyses Endonucleolytic cleavage of RNA, removing extra 3' nucleotides from tRNA precursor, generating 3' termini of tRNAs. A 3'-hydroxy group is left at the tRNA terminus and a 5'-phosphoryl group is left at the trailer molecule.. Functionally, zinc phosphodiesterase, which displays some tRNA 3'-processing endonuclease activity. Probably involved in tRNA maturation, by removing a 3'-trailer from precursor tRNA. In Chlamydia trachomatis serovar D (strain ATCC VR-885 / DSM 19411 / UW-3/Cx), this protein is Ribonuclease Z.